A 541-amino-acid chain; its full sequence is Protein wntless homolog (541 aa).

At 1–15 (MAGAIIENMSTKKLC) the chain is on the cytoplasmic side. A helical membrane pass occupies residues 16–36 (IVGGILLVFQIVAFLVGGLIA). At 37 to 232 (PAPTTAVPYT…GIHQNGGFTK (196 aa)) the chain is on the lumenal side. Positions 101 to 232 (MEMSPWFQFM…GIHQNGGFTK (132 aa)) are interaction with Wnt proteins. The helical transmembrane segment at 233–253 (VWFAMKTFLTPSIFIIMVWYW) threads the bilayer. At 254–268 (RRITMMSRPPVLLEK) the chain is on the cytoplasmic side. Residues 269 to 289 (VIFALGISMTFINIPVEWFSI) form a helical membrane-spanning segment. Topologically, residues 290–303 (GFDWTWMLLFGDIR) are lumenal. A helical membrane pass occupies residues 304–324 (QGIFYAMLLSFWIIFCGEHMM). The Cytoplasmic portion of the chain corresponds to 325–331 (DQHERNH). The chain crosses the membrane as a helical span at residues 332–352 (IAGYWKQVGPIAVGSFCLFIF). Topologically, residues 353 to 380 (DMCERGVQLTNPFYSIWTTDVGTELAMA) are lumenal. A helical membrane pass occupies residues 381-401 (FIIVAGICLCLYFLFLCFMVF). Topologically, residues 402–431 (QVFRNISGKQSSLPAMSKVRRLHYEGLIFR) are cytoplasmic. The helical transmembrane segment at 432–452 (FKFLMLITLACAAMTVIFFIV) threads the bilayer. Residues 453–471 (SQVSEGHWKWGGVTVQVSS) lie on the Lumenal side of the membrane. A helical membrane pass occupies residues 472–492 (AFFTGIYGMWNLYVFALMFLY). Residues 493 to 541 (APSHKNYGEDQSNGDLGVHSGEELQLTTTITHVDGPTEIYKLTRKEAQE) lie on the Cytoplasmic side of the membrane.

It belongs to the wntless family. As to quaternary structure, interacts with WNT3A. Interacts with WNT1, WNT3 and WNT5. N-glycosylated. Expressed in the brain, skeletal muscle, heart muscle, lung, gut, liver, and kidney (at protein level). In the brain, expressed in the cortex, striatum, hippocampus and to a lesser extent in the cerebellum (at protein level). Expressed in kidney, lung, skin, intestine, brain, spinal cord, skeleton, eyes, excretion glands, tooth and palatal shelves. In the cerebellum, expressed in Purkinje cells.

It is found in the golgi apparatus membrane. Its subcellular location is the cytoplasmic vesicle membrane. The protein resides in the cell membrane. It localises to the endoplasmic reticulum membrane. The protein localises to the early endosome membrane. Regulates Wnt proteins sorting and secretion in a feedback regulatory mechanism. This reciprocal interaction plays a key role in the regulation of expression, subcellular location, binding and organelle-specific association of Wnt proteins. Also plays an important role in establishment of the anterior-posterior body axis formation during development. The chain is Protein wntless homolog (Wls) from Mus musculus (Mouse).